The primary structure comprises 444 residues: ATP-dependent protease ATPase subunit HslU (444 aa).

ATP contacts are provided by residues I18 and 60-65 (GVGKTE). The disordered stretch occupies residues 143–163 (WGEVENHDSHSSTRQAFRKKL). 3 residues coordinate ATP: D257, E322, and R394.

Belongs to the ClpX chaperone family. HslU subfamily. In terms of assembly, a double ring-shaped homohexamer of HslV is capped on each side by a ring-shaped HslU homohexamer. The assembly of the HslU/HslV complex is dependent on binding of ATP.

The protein resides in the cytoplasm. Functionally, ATPase subunit of a proteasome-like degradation complex; this subunit has chaperone activity. The binding of ATP and its subsequent hydrolysis by HslU are essential for unfolding of protein substrates subsequently hydrolyzed by HslV. HslU recognizes the N-terminal part of its protein substrates and unfolds these before they are guided to HslV for hydrolysis. The chain is ATP-dependent protease ATPase subunit HslU from Haemophilus influenzae (strain 86-028NP).